The following is a 224-amino-acid chain: 7-cyano-7-deazaguanine synthase (224 aa).

7–17 is an ATP binding site; that stretch reads LSGGLDSSTIL. Zn(2+) contacts are provided by C191, C199, C202, and C205.

Belongs to the QueC family. Zn(2+) serves as cofactor.

The catalysed reaction is 7-carboxy-7-deazaguanine + NH4(+) + ATP = 7-cyano-7-deazaguanine + ADP + phosphate + H2O + H(+). It functions in the pathway purine metabolism; 7-cyano-7-deazaguanine biosynthesis. In terms of biological role, catalyzes the ATP-dependent conversion of 7-carboxy-7-deazaguanine (CDG) to 7-cyano-7-deazaguanine (preQ(0)). This is 7-cyano-7-deazaguanine synthase from Nostoc punctiforme (strain ATCC 29133 / PCC 73102).